The sequence spans 231 residues: Large ribosomal subunit protein uL1 (231 aa).

This sequence belongs to the universal ribosomal protein uL1 family. As to quaternary structure, part of the 50S ribosomal subunit.

In terms of biological role, binds directly to 23S rRNA. The L1 stalk is quite mobile in the ribosome, and is involved in E site tRNA release. Functionally, protein L1 is also a translational repressor protein, it controls the translation of the L11 operon by binding to its mRNA. In Herminiimonas arsenicoxydans, this protein is Large ribosomal subunit protein uL1.